Consider the following 486-residue polypeptide: ATP synthase subunit beta (486 aa).

Residues 1 to 12 show a composition bias toward basic and acidic residues; it reads MTTTAEKTDRPG. The tract at residues 1-22 is disordered; it reads MTTTAEKTDRPGKPGSSDTSGR. 171–178 is an ATP binding site; it reads GGAGVGKT.

The protein belongs to the ATPase alpha/beta chains family. As to quaternary structure, F-type ATPases have 2 components, CF(1) - the catalytic core - and CF(0) - the membrane proton channel. CF(1) has five subunits: alpha(3), beta(3), gamma(1), delta(1), epsilon(1). CF(0) has three main subunits: a(1), b(2) and c(9-12). The alpha and beta chains form an alternating ring which encloses part of the gamma chain. CF(1) is attached to CF(0) by a central stalk formed by the gamma and epsilon chains, while a peripheral stalk is formed by the delta and b chains.

It is found in the cell membrane. It catalyses the reaction ATP + H2O + 4 H(+)(in) = ADP + phosphate + 5 H(+)(out). Produces ATP from ADP in the presence of a proton gradient across the membrane. The catalytic sites are hosted primarily by the beta subunits. The polypeptide is ATP synthase subunit beta (Mycobacterium tuberculosis (strain ATCC 25177 / H37Ra)).